A 518-amino-acid chain; its full sequence is Probable Xaa-Pro aminopeptidase HCDG_07916 (518 aa).

Residues aspartate 289, aspartate 300, glutamate 437, and glutamate 475 each coordinate Mn(2+).

Belongs to the peptidase M24B family. It depends on Mn(2+) as a cofactor.

The enzyme catalyses Release of any N-terminal amino acid, including proline, that is linked to proline, even from a dipeptide or tripeptide.. Catalyzes the removal of a penultimate prolyl residue from the N-termini of peptides. This Ajellomyces capsulatus (strain H143) (Darling's disease fungus) protein is Probable Xaa-Pro aminopeptidase HCDG_07916.